Consider the following 187-residue polypeptide: Threonylcarbamoyl-AMP synthase (187 aa).

The YrdC-like domain maps to 4–187 (ILTLDNAVAT…DARSGQILRD (184 aa)).

This sequence belongs to the SUA5 family. TsaC subfamily.

It localises to the cytoplasm. The enzyme catalyses L-threonine + hydrogencarbonate + ATP = L-threonylcarbamoyladenylate + diphosphate + H2O. In terms of biological role, required for the formation of a threonylcarbamoyl group on adenosine at position 37 (t(6)A37) in tRNAs that read codons beginning with adenine. Catalyzes the conversion of L-threonine, HCO(3)(-)/CO(2) and ATP to give threonylcarbamoyl-AMP (TC-AMP) as the acyladenylate intermediate, with the release of diphosphate. The sequence is that of Threonylcarbamoyl-AMP synthase from Xanthomonas oryzae pv. oryzae (strain MAFF 311018).